Consider the following 293-residue polypeptide: Glutamyl-Q tRNA(Asp) synthetase (293 aa).

L-glutamate contacts are provided by residues 8 to 12 (RFAPT) and glutamate 44. Positions 11 to 21 (PTPSGYLHFGS) match the 'HIGH' region motif. Positions 100, 102, 114, and 118 each coordinate Zn(2+). L-glutamate is bound by residues tyrosine 171 and arginine 189. A 'KMSKS' region motif is present at residues 227-231 (KLGKS). An ATP-binding site is contributed by lysine 230.

The protein belongs to the class-I aminoacyl-tRNA synthetase family. GluQ subfamily. Requires Zn(2+) as cofactor.

Its function is as follows. Catalyzes the tRNA-independent activation of glutamate in presence of ATP and the subsequent transfer of glutamate onto a tRNA(Asp). Glutamate is transferred on the 2-amino-5-(4,5-dihydroxy-2-cyclopenten-1-yl) moiety of the queuosine in the wobble position of the QUC anticodon. In Pseudomonas paraeruginosa (strain DSM 24068 / PA7) (Pseudomonas aeruginosa (strain PA7)), this protein is Glutamyl-Q tRNA(Asp) synthetase.